The following is a 123-amino-acid chain: NADH dehydrogenase [ubiquinone] 1 beta subcomplex subunit 7 (123 aa).

Residues 1–32 (MGTKLSVSLEGASTPETAPRVDRPPTFDPQYG) form a disordered region. The 44-residue stretch at 59 to 102 (RDYCAHHLISLMKCQTQNAPFAGHACDGERGAWDKCEYDDHIMR) folds into the CHCH domain. Short sequence motifs (cx9C motif) lie at residues 62–72 (CAHHLISLMKC) and 84–94 (CDGERGAWDKC). Intrachain disulfides connect Cys-62–Cys-94 and Cys-72–Cys-84.

It belongs to the complex I NDUFB7 subunit family. In terms of assembly, complex I is composed of 45 different subunits.

The protein resides in the mitochondrion. It localises to the mitochondrion inner membrane. Its subcellular location is the mitochondrion intermembrane space. Functionally, accessory subunit of the mitochondrial membrane respiratory chain NADH dehydrogenase (Complex I), that is believed not to be involved in catalysis. Complex I functions in the transfer of electrons from NADH to the respiratory chain. The immediate electron acceptor for the enzyme is believed to be ubiquinone. The chain is NADH dehydrogenase [ubiquinone] 1 beta subcomplex subunit 7 from Caenorhabditis elegans.